We begin with the raw amino-acid sequence, 200 residues long: GTP cyclohydrolase-2 (200 aa).

A GTP-binding site is contributed by 49-53; that stretch reads RIHSE. 3 residues coordinate Zn(2+): cysteine 54, cysteine 65, and cysteine 67. Residues glutamine 70, 92–94, and threonine 114 contribute to the GTP site; that span reads EGR. The Proton acceptor role is filled by aspartate 126. Residue arginine 128 is the Nucleophile of the active site. 2 residues coordinate GTP: threonine 149 and lysine 154.

This sequence belongs to the GTP cyclohydrolase II family. Requires Zn(2+) as cofactor.

It catalyses the reaction GTP + 4 H2O = 2,5-diamino-6-hydroxy-4-(5-phosphoribosylamino)-pyrimidine + formate + 2 phosphate + 3 H(+). It participates in cofactor biosynthesis; riboflavin biosynthesis; 5-amino-6-(D-ribitylamino)uracil from GTP: step 1/4. Functionally, catalyzes the conversion of GTP to 2,5-diamino-6-ribosylamino-4(3H)-pyrimidinone 5'-phosphate (DARP), formate and pyrophosphate. The chain is GTP cyclohydrolase-2 from Saccharophagus degradans (strain 2-40 / ATCC 43961 / DSM 17024).